The primary structure comprises 383 residues: Na(+)/H(+) antiporter NhaA (383 aa).

The next 11 helical transmembrane spans lie at 10–30, 56–76, 91–111, 121–141, 150–170, 174–194, 206–226, 254–274, 275–295, 327–347, and 355–375; these read LIGG…NNSP, LMHW…GLEI, IITP…IYLS, GWAI…ALLG, LLVI…IAIF, SLSL…IICN, VVLG…ATLA, PWII…ISFS, GISF…GLFV, GISL…VLAF, and AIKI…YIVL.

The protein belongs to the NhaA Na(+)/H(+) (TC 2.A.33) antiporter family.

Its subcellular location is the cell inner membrane. It carries out the reaction Na(+)(in) + 2 H(+)(out) = Na(+)(out) + 2 H(+)(in). Functionally, na(+)/H(+) antiporter that extrudes sodium in exchange for external protons. The sequence is that of Na(+)/H(+) antiporter NhaA from Francisella tularensis subsp. novicida (strain U112).